The primary structure comprises 806 residues: Leucine--tRNA ligase (806 aa).

Positions 38 to 48 (PYPSGEIHMGH) match the 'HIGH' region motif. The 'KMSKS' region signature appears at 572 to 576 (KMSKS). K575 provides a ligand contact to ATP.

The protein belongs to the class-I aminoacyl-tRNA synthetase family.

The protein localises to the cytoplasm. It carries out the reaction tRNA(Leu) + L-leucine + ATP = L-leucyl-tRNA(Leu) + AMP + diphosphate. The polypeptide is Leucine--tRNA ligase (Helicobacter acinonychis (strain Sheeba)).